Consider the following 85-residue polypeptide: Cell division topological specificity factor (85 aa).

Belongs to the MinE family.

Prevents the cell division inhibition by proteins MinC and MinD at internal division sites while permitting inhibition at polar sites. This ensures cell division at the proper site by restricting the formation of a division septum at the midpoint of the long axis of the cell. The protein is Cell division topological specificity factor of Xanthomonas euvesicatoria pv. vesicatoria (strain 85-10) (Xanthomonas campestris pv. vesicatoria).